A 356-amino-acid polypeptide reads, in one-letter code: Dual-specificity RNA methyltransferase RlmN (356 aa).

Glu-89 (proton acceptor) is an active-site residue. One can recognise a Radical SAM core domain in the interval 108–341 (SHARYTICVS…CTIRESKGLD (234 aa)). Cys-115 and Cys-346 are disulfide-bonded. [4Fe-4S] cluster contacts are provided by Cys-122, Cys-126, and Cys-129. S-adenosyl-L-methionine is bound by residues 172 to 173 (GE), Ser-204, 227 to 229 (SLH), and Asn-303. The active-site S-methylcysteine intermediate is the Cys-346.

This sequence belongs to the radical SAM superfamily. RlmN family. It depends on [4Fe-4S] cluster as a cofactor.

The protein resides in the cytoplasm. It carries out the reaction adenosine(2503) in 23S rRNA + 2 reduced [2Fe-2S]-[ferredoxin] + 2 S-adenosyl-L-methionine = 2-methyladenosine(2503) in 23S rRNA + 5'-deoxyadenosine + L-methionine + 2 oxidized [2Fe-2S]-[ferredoxin] + S-adenosyl-L-homocysteine. The catalysed reaction is adenosine(37) in tRNA + 2 reduced [2Fe-2S]-[ferredoxin] + 2 S-adenosyl-L-methionine = 2-methyladenosine(37) in tRNA + 5'-deoxyadenosine + L-methionine + 2 oxidized [2Fe-2S]-[ferredoxin] + S-adenosyl-L-homocysteine. In terms of biological role, specifically methylates position 2 of adenine 2503 in 23S rRNA and position 2 of adenine 37 in tRNAs. m2A2503 modification seems to play a crucial role in the proofreading step occurring at the peptidyl transferase center and thus would serve to optimize ribosomal fidelity. This chain is Dual-specificity RNA methyltransferase RlmN, found in Campylobacter jejuni subsp. jejuni serotype O:2 (strain ATCC 700819 / NCTC 11168).